The primary structure comprises 399 residues: Elongation factor Tu (399 aa).

One can recognise a tr-type G domain in the interval 10 to 209 (KPHVNIGTIG…EVDAYIPTPE (200 aa)). Residues 19–26 (GHVDHGKT) are G1. 19–26 (GHVDHGKT) serves as a coordination point for GTP. Mg(2+) is bound at residue Thr26. Positions 60–64 (GITIA) are G2. Residues 81-84 (DCPG) are G3. Residues 81-85 (DCPGH) and 136-139 (NKQD) each bind GTP. Residues 136-139 (NKQD) form a G4 region. Residues 174–176 (SAL) form a G5 region.

This sequence belongs to the TRAFAC class translation factor GTPase superfamily. Classic translation factor GTPase family. EF-Tu/EF-1A subfamily. As to quaternary structure, monomer.

The protein localises to the cytoplasm. The catalysed reaction is GTP + H2O = GDP + phosphate + H(+). In terms of biological role, GTP hydrolase that promotes the GTP-dependent binding of aminoacyl-tRNA to the A-site of ribosomes during protein biosynthesis. In Helicobacter pylori (strain ATCC 700392 / 26695) (Campylobacter pylori), this protein is Elongation factor Tu.